The following is a 348-amino-acid chain: Photosystem II protein D1 (348 aa).

Transmembrane regions (helical) follow at residues Tyr33–Val50, His122–Phe137, and Trp146–Ala160. His122 is a chlorophyll a binding site. Residue Tyr130 participates in pheophytin a binding. Asp174 and Glu193 together coordinate [CaMn4O5] cluster. A helical membrane pass occupies residues Phe201 to Leu222. His202 is a chlorophyll a binding site. A quinone is bound by residues His219 and Ser268–Phe269. Residue His219 coordinates Fe cation. His276 contributes to the Fe cation binding site. The helical transmembrane segment at Phe278–Leu292 threads the bilayer. His336, Glu337, Asp346, and Ala348 together coordinate [CaMn4O5] cluster.

It belongs to the reaction center PufL/M/PsbA/D family. In terms of assembly, PSII is composed of 1 copy each of membrane proteins PsbA, PsbB, PsbC, PsbD, PsbE, PsbF, PsbH, PsbI, PsbJ, PsbK, PsbL, PsbM, PsbT, PsbX, PsbY, PsbZ, Psb30/Ycf12, at least 3 peripheral proteins of the oxygen-evolving complex and a large number of cofactors. It forms dimeric complexes. The D1/D2 heterodimer binds P680, chlorophylls that are the primary electron donor of PSII, and subsequent electron acceptors. It shares a non-heme iron and each subunit binds pheophytin, quinone, additional chlorophylls, carotenoids and lipids. D1 provides most of the ligands for the Mn4-Ca-O5 cluster of the oxygen-evolving complex (OEC). There is also a Cl(-1) ion associated with D1 and D2, which is required for oxygen evolution. The PSII complex binds additional chlorophylls, carotenoids and specific lipids. serves as cofactor. Post-translationally, tyr-165 forms a radical intermediate that is referred to as redox-active TyrZ, YZ or Y-Z.

It localises to the plastid. Its subcellular location is the chloroplast thylakoid membrane. It carries out the reaction 2 a plastoquinone + 4 hnu + 2 H2O = 2 a plastoquinol + O2. Functionally, photosystem II (PSII) is a light-driven water:plastoquinone oxidoreductase that uses light energy to abstract electrons from H(2)O, generating O(2) and a proton gradient subsequently used for ATP formation. It consists of a core antenna complex that captures photons, and an electron transfer chain that converts photonic excitation into a charge separation. The D1/D2 (PsbA/PsbD) reaction center heterodimer binds P680, the primary electron donor of PSII as well as several subsequent electron acceptors. This Heterocapsa pygmaea (Dinoflagellate) protein is Photosystem II protein D1.